The chain runs to 1038 residues: Probable LRR receptor-like serine/threonine-protein kinase At1g53430 (1038 aa).

An N-terminal signal peptide occupies residues 1 to 28 (MGFIFSTEKVVYVLLLIFVCLENFGSNA). Over 29 to 609 (QLLPEDEVQT…VDTGKPLSNG (581 aa)) the chain is Extracellular. N-linked (GlcNAc...) asparagine glycosylation is found at Asn-48, Asn-77, Asn-85, Asn-112, and Asn-127. LRR repeat units lie at residues 113 to 137 (LTRL…LSQI), 139 to 160 (LEIL…LGDI), 161 to 184 (TTLT…LGNL), 185 to 208 (RSLK…LSNL), 210 to 234 (NLTE…NWTL), and 236 to 256 (ERLD…ISNL). N-linked (GlcNAc...) asparagine glycans are attached at residues Asn-196, Asn-210, Asn-231, Asn-255, and Asn-258. 5 LRR repeats span residues 259–281 (LTEL…LRNL), 282–305 (MKMK…IGSM), 306–328 (SELK…TFRN), 330–351 (DAFN…QFII), and 352–374 (NSKE…SCNQ). Residues Asn-339, Asn-363, Asn-471, and Asn-561 are each glycosylated (N-linked (GlcNAc...) asparagine). The chain crosses the membrane as a helical span at residues 610–630 (AVAGIVIAACAVFGLLVLVIL). Over 631–1038 (RLTGYLGGKE…LDDLTDVKIE (408 aa)) the chain is Cytoplasmic. Thr-658 carries the phosphothreonine modification. Residues 669 to 950 (FDPENKIGEG…EGKIKVQPPL (282 aa)) form the Protein kinase domain. Residues 675–683 (IGEGGFGPV) and Lys-697 contribute to the ATP site. Position 742 is a phosphotyrosine (Tyr-742). Residue Asp-795 is the Proton acceptor of the active site. At Ser-828 the chain carries Phosphoserine. Thr-829 and Thr-834 each carry phosphothreonine. Tyr-842 carries the phosphotyrosine modification. A disordered region spans residues 984–1038 (RNREQDISSSSMDGPWVDSSFSEPGKDVSLQQQEEGRSSSSSRKLLDDLTDVKIE). A compositionally biased stretch (basic and acidic residues) spans 1027-1038 (KLLDDLTDVKIE).

It belongs to the protein kinase superfamily. Ser/Thr protein kinase family.

Its subcellular location is the membrane. The catalysed reaction is L-seryl-[protein] + ATP = O-phospho-L-seryl-[protein] + ADP + H(+). The enzyme catalyses L-threonyl-[protein] + ATP = O-phospho-L-threonyl-[protein] + ADP + H(+). This is Probable LRR receptor-like serine/threonine-protein kinase At1g53430 from Arabidopsis thaliana (Mouse-ear cress).